Here is a 339-residue protein sequence, read N- to C-terminus: Foldase protein PrsA (339 aa).

The first 26 residues, 1 to 26, serve as a signal peptide directing secretion; that stretch reads MKHLKNNTKKFTALLFALLFSMSIAG. Residue Cys-27 is the site of N-palmitoyl cysteine attachment. A lipid anchor (S-diacylglycerol cysteine) is attached at Cys-27. Positions 197 to 287 constitute a PpiC domain; the sequence is KPTFHAQHVL…FGYHVIKLID (91 aa).

This sequence belongs to the PrsA family.

The protein localises to the cell membrane. The catalysed reaction is [protein]-peptidylproline (omega=180) = [protein]-peptidylproline (omega=0). Its function is as follows. Plays a major role in protein secretion by helping the post-translocational extracellular folding of several secreted proteins. The sequence is that of Foldase protein PrsA from Clostridium tetani (strain Massachusetts / E88).